A 204-amino-acid polypeptide reads, in one-letter code: Methylthioribulose-1-phosphate dehydratase (204 aa).

The Zn(2+) site is built by H95 and H97.

It belongs to the aldolase class II family. MtnB subfamily. The cofactor is Zn(2+).

It carries out the reaction 5-(methylsulfanyl)-D-ribulose 1-phosphate = 5-methylsulfanyl-2,3-dioxopentyl phosphate + H2O. Its pathway is amino-acid biosynthesis; L-methionine biosynthesis via salvage pathway; L-methionine from S-methyl-5-thio-alpha-D-ribose 1-phosphate: step 2/6. Catalyzes the dehydration of methylthioribulose-1-phosphate (MTRu-1-P) into 2,3-diketo-5-methylthiopentyl-1-phosphate (DK-MTP-1-P). This is Methylthioribulose-1-phosphate dehydratase from Parvibaculum lavamentivorans (strain DS-1 / DSM 13023 / NCIMB 13966).